Here is a 130-residue protein sequence, read N- to C-terminus: kinetoplast-associated protein 2-2 (130 aa).

The propeptide occupies 1-10 (MLRRTVSNFA). The segment at 95 to 130 (ETKQAQRAKAQKAQKKPKSAKSKVKKAAKKAKKSKK) is disordered. A compositionally biased stretch (basic residues) spans 103 to 130 (KAQKAQKKPKSAKSKVKKAAKKAKKSKK).

It belongs to the KAP family. Associates with the kinetoplast DNA network.

Its subcellular location is the mitochondrion matrix. It is found in the kinetoplast. In terms of biological role, histone H1-like DNA-binding protein involved in the organization and segregation of kinetoplast DNA (kDNA). The mitochondrial DNA of kinetoplastid protozoa consists of about 5,000 minicircles and 20 to 30 maxicircles. These circular DNAs are held together by catenation into a highly organized compact disk structure referred to as a kinetoplast DNA (kDNA) network. Binds preferentially to a specific fragment of minicircle DNA and is able to compact kDNA networks through DNA charge neutralization and condensation. In Crithidia fasciculata, this protein is kinetoplast-associated protein 2-2 (KAP2-2).